We begin with the raw amino-acid sequence, 472 residues long: Methanethiol oxidase (472 aa).

A2 is subject to N-acetylalanine. S467 is modified (phosphoserine).

Belongs to the selenium-binding protein family. Interacts with USP33. In terms of processing, the N-terminus is blocked.

Its subcellular location is the nucleus. It is found in the cytoplasm. The protein localises to the cytosol. It localises to the membrane. It carries out the reaction methanethiol + O2 + H2O = hydrogen sulfide + formaldehyde + H2O2 + H(+). It functions in the pathway organosulfur degradation. Functionally, catalyzes the oxidation of methanethiol, an organosulfur compound known to be produced in substantial amounts by gut bacteria. Selenium-binding protein which may be involved in the sensing of reactive xenobiotics in the cytoplasm. May be involved in intra-Golgi protein transport. This Bos taurus (Bovine) protein is Methanethiol oxidase (SELENBP1).